A 444-amino-acid polypeptide reads, in one-letter code: Amino-acid acetyltransferase (444 aa).

The 140-residue stretch at 295 to 434 folds into the N-acetyltransferase domain; it reads EKVRRANIND…QALYNYQRRS (140 aa).

The protein belongs to the acetyltransferase family. ArgA subfamily. As to quaternary structure, homohexamer.

It is found in the cytoplasm. The enzyme catalyses L-glutamate + acetyl-CoA = N-acetyl-L-glutamate + CoA + H(+). It functions in the pathway amino-acid biosynthesis; L-arginine biosynthesis; N(2)-acetyl-L-ornithine from L-glutamate: step 1/4. The protein is Amino-acid acetyltransferase of Proteus mirabilis (strain HI4320).